The following is a 221-amino-acid chain: tRNA (guanine-N(7)-)-methyltransferase (221 aa).

S-adenosyl-L-methionine-binding residues include E43, E68, and D123. The active site involves D123. Residues K127, D159, and 199–202 (TEYE) contribute to the substrate site.

The protein belongs to the class I-like SAM-binding methyltransferase superfamily. TrmB family.

It catalyses the reaction guanosine(46) in tRNA + S-adenosyl-L-methionine = N(7)-methylguanosine(46) in tRNA + S-adenosyl-L-homocysteine. It functions in the pathway tRNA modification; N(7)-methylguanine-tRNA biosynthesis. In terms of biological role, catalyzes the formation of N(7)-methylguanine at position 46 (m7G46) in tRNA. This chain is tRNA (guanine-N(7)-)-methyltransferase, found in Mycoplasma mycoides subsp. mycoides SC (strain CCUG 32753 / NCTC 10114 / PG1).